A 483-amino-acid chain; its full sequence is MPVITRFAPSPTGFLHIGGARTALFNWLYAKHTGGKMLLRIEDTDRERSTEAAVKAIIDGLHWMGLSYDGDPISQFERAERHRQVAEQLVKDGKAYYCYASPEELAEIRENARAEGRPPRYDGRWRERDISKAPKDIKPVIRIKAPQDGETIVHDRVQGDVRFPNKDLDDFIILRSDGSPTYMHAVVVDDHDMGVTHIIRGDDHLTNAARQTIIFNAMGWDIPVMAHIPLIHGENGAKLSKRHGALGVAAYRKMGYLPAALRNYLVRLGWSHGDDELMSIEDMISWFDIDDINKGAARFDLKKLDAINGHYIRMSNNQDLFDAALHILKEIEGGLQIMERLDEQRRAQFLKAIPNLKERSKTLCELIDNASFIFTKRPLQLDEKAQTLLDKNGLAILKVIYLALKACPSWDVKSLDETLRSYAQTQDLKFGSIAQPLRAALTGRLTSPGVFDVLVLLGRDESLNRINDQLVTTACSLHTNQCI.

The 'HIGH' region motif lies at 9–19 (PSPTGFLHIGG). Residues 238 to 242 (KLSKR) carry the 'KMSKS' region motif. K241 contributes to the ATP binding site.

This sequence belongs to the class-I aminoacyl-tRNA synthetase family. Glutamate--tRNA ligase type 1 subfamily. In terms of assembly, monomer.

The protein resides in the cytoplasm. It carries out the reaction tRNA(Glu) + L-glutamate + ATP = L-glutamyl-tRNA(Glu) + AMP + diphosphate. Catalyzes the attachment of glutamate to tRNA(Glu) in a two-step reaction: glutamate is first activated by ATP to form Glu-AMP and then transferred to the acceptor end of tRNA(Glu). This chain is Glutamate--tRNA ligase 1, found in Bartonella henselae (strain ATCC 49882 / DSM 28221 / CCUG 30454 / Houston 1) (Rochalimaea henselae).